Consider the following 362-residue polypeptide: 3-dehydroquinate synthase (362 aa).

NAD(+) contacts are provided by residues 71 to 76, 105 to 109, 129 to 130, Lys-142, Lys-151, and 169 to 172; these read DGEQYK, GVVGD, TT, and CLNT. Residues Glu-184, His-247, and His-264 each contribute to the Zn(2+) site.

Belongs to the sugar phosphate cyclases superfamily. Dehydroquinate synthase family. Co(2+) is required as a cofactor. Zn(2+) serves as cofactor. It depends on NAD(+) as a cofactor.

Its subcellular location is the cytoplasm. The enzyme catalyses 7-phospho-2-dehydro-3-deoxy-D-arabino-heptonate = 3-dehydroquinate + phosphate. It participates in metabolic intermediate biosynthesis; chorismate biosynthesis; chorismate from D-erythrose 4-phosphate and phosphoenolpyruvate: step 2/7. Functionally, catalyzes the conversion of 3-deoxy-D-arabino-heptulosonate 7-phosphate (DAHP) to dehydroquinate (DHQ). The chain is 3-dehydroquinate synthase from Enterobacter sp. (strain 638).